Reading from the N-terminus, the 144-residue chain is Universal stress protein F (144 aa).

It belongs to the universal stress protein A family. Homodimer.

This Salmonella typhi protein is Universal stress protein F (uspF).